The primary structure comprises 253 residues: MAGHSKFKNIQHRKGAQDKKRAKVFTKLIREIVTAVKAGSTNPDNNPRLRTALATARSQNLPKERIDKAINSANDSANNENYTEIRYEGYAPGGIAIIVEALTDNKNRTAAEVRSSFTKYGGNLGETGSVNFLFKHCGVIQYPLEISSAENILETAIEAGTDDIVSDEVLHTIYTDIENFSKVLEFLTDKYGTAEEAYIGWVPLNTIIIDDKEKAEKLLKLVDLLEESDDVQRVFGNYELSDEIYEILQGSDE.

A disordered region spans residues 1–21 (MAGHSKFKNIQHRKGAQDKKR).

This sequence belongs to the TACO1 family.

Its subcellular location is the cytoplasm. The sequence is that of Probable transcriptional regulatory protein RBE_0568 from Rickettsia bellii (strain RML369-C).